A 218-amino-acid polypeptide reads, in one-letter code: N-(5'-phosphoribosyl)anthranilate isomerase (218 aa).

This sequence belongs to the TrpF family.

It carries out the reaction N-(5-phospho-beta-D-ribosyl)anthranilate = 1-(2-carboxyphenylamino)-1-deoxy-D-ribulose 5-phosphate. Its pathway is amino-acid biosynthesis; L-tryptophan biosynthesis; L-tryptophan from chorismate: step 3/5. This Halalkalibacterium halodurans (strain ATCC BAA-125 / DSM 18197 / FERM 7344 / JCM 9153 / C-125) (Bacillus halodurans) protein is N-(5'-phosphoribosyl)anthranilate isomerase.